We begin with the raw amino-acid sequence, 688 residues long: Ethylmalonyl-CoA mutase (688 aa).

The B12-binding domain occupies 530–659 (TPRLVVGKPG…VGLAKVVERA (130 aa)). Residue His543 participates in adenosylcob(III)alamin binding. The segment at 666-688 (DRADTEAGVPGAPKRNESGAQVF) is disordered.

It belongs to the methylmalonyl-CoA mutase family. Requires adenosylcob(III)alamin as cofactor.

The catalysed reaction is (2R)-ethylmalonyl-CoA = (2S)-methylsuccinyl-CoA. Its function is as follows. Radical enzyme that catalyzes the transformation of (2R)-ethylmalonyl-CoA to (2S)-methylsuccinyl-CoA. Is involved in the ethylmalonyl-CoA pathway for acetyl-CoA assimilation required for M.extorquens growth on one- and two-carbon compounds such as ethylamine, methanol or ethanol as sole carbon source. This enzyme acts as a regulatory metabolic control point in this pathway, that allows M.extorquens to efficiently restore metabolic balance when challenged with a sudden change in the growth substrate. The chain is Ethylmalonyl-CoA mutase from Methylorubrum extorquens (strain ATCC 14718 / DSM 1338 / JCM 2805 / NCIMB 9133 / AM1) (Methylobacterium extorquens).